A 188-amino-acid polypeptide reads, in one-letter code: Pyridoxal 5'-phosphate synthase subunit PdxT (188 aa).

Position 47 to 49 (47 to 49 (GES)) interacts with L-glutamine. Residue Cys-79 is the Nucleophile of the active site. L-glutamine is bound by residues Arg-105 and 134-135 (IR). Catalysis depends on charge relay system residues His-170 and Glu-172.

It belongs to the glutaminase PdxT/SNO family. As to quaternary structure, in the presence of PdxS, forms a dodecamer of heterodimers. Only shows activity in the heterodimer.

The catalysed reaction is aldehydo-D-ribose 5-phosphate + D-glyceraldehyde 3-phosphate + L-glutamine = pyridoxal 5'-phosphate + L-glutamate + phosphate + 3 H2O + H(+). It carries out the reaction L-glutamine + H2O = L-glutamate + NH4(+). It functions in the pathway cofactor biosynthesis; pyridoxal 5'-phosphate biosynthesis. Its function is as follows. Catalyzes the hydrolysis of glutamine to glutamate and ammonia as part of the biosynthesis of pyridoxal 5'-phosphate. The resulting ammonia molecule is channeled to the active site of PdxS. In Listeria welshimeri serovar 6b (strain ATCC 35897 / DSM 20650 / CCUG 15529 / CIP 8149 / NCTC 11857 / SLCC 5334 / V8), this protein is Pyridoxal 5'-phosphate synthase subunit PdxT.